A 142-amino-acid chain; its full sequence is Gene 46 protein (142 aa).

Positions 82–101 are disordered; sequence KALAQVKPETGPSRPNRKKL.

The polypeptide is Gene 46 protein (46) (Mycobacterium (Mycobacteriophage L5)).